The sequence spans 37 residues: Large ribosomal subunit protein bL36 (37 aa).

This sequence belongs to the bacterial ribosomal protein bL36 family.

This Pasteurella multocida (strain Pm70) protein is Large ribosomal subunit protein bL36.